A 437-amino-acid chain; its full sequence is Repulsive guidance molecule B (437 aa).

The N-terminal stretch at 1–45 (MGLRAAPSSAAAAAAEVEQRRSPGLCPPPLELLLLLLFSLGLLHA) is a signal peptide. An N-linked (GlcNAc...) asparagine glycan is attached at asparagine 120. A compositionally biased stretch (polar residues) spans 121–133 (CSKDGPTSSTNPE). The disordered stretch occupies residues 121-153 (CSKDGPTSSTNPEVTHDPCNYHSHAGAREHRRG). 2 cysteine pairs are disulfide-bonded: cysteine 139-cysteine 226 and cysteine 163-cysteine 312. An N-linked (GlcNAc...) asparagine glycan is attached at asparagine 383. A lipid anchor (GPI-anchor amidated asparagine) is attached at asparagine 413. The propeptide at 414–437 (GTPRGGSDLSVSLGLTCLILIVFL) is removed in mature form.

The protein belongs to the repulsive guidance molecule (RGM) family. In terms of assembly, homooligomer. Interacts with DRGX. Interacts with BMP2 and BMP4. Interacts with the BMP type I receptors ACVR1, BMPR1A and BMPR1B and with the BMP type II receptor ACVR2B. The functional complex with its receptor NEO1/neogenin appears to be a heterotetramer with a 2:2 stoichiometry, RGM molecules acting as staples that bring two NEO1 receptors together without interacting themselves, this arrangement leads to activation of downstream signaling via RhoA. GPI-anchored. In terms of processing, autocatalytically cleaved at low pH; the two chains remain linked via two disulfide bonds.

It localises to the cell membrane. Its subcellular location is the membrane raft. Its function is as follows. Member of the repulsive guidance molecule (RGM) family that contributes to the patterning of the developing nervous system. Acts as a bone morphogenetic protein (BMP) coreceptor that potentiates BMP signaling. Promotes neuronal adhesion. May inhibit neurite outgrowth. The polypeptide is Repulsive guidance molecule B (Homo sapiens (Human)).